The sequence spans 303 residues: UDP-N-acetylenolpyruvoylglucosamine reductase (303 aa).

Positions 27-191 constitute an FAD-binding PCMH-type domain; that stretch reads VGGPAARLYK…ISAKLQLTPG (165 aa). Residue Arg-171 is part of the active site. Ser-220 serves as the catalytic Proton donor. Residue Glu-291 is part of the active site.

This sequence belongs to the MurB family. It depends on FAD as a cofactor.

It is found in the cytoplasm. The enzyme catalyses UDP-N-acetyl-alpha-D-muramate + NADP(+) = UDP-N-acetyl-3-O-(1-carboxyvinyl)-alpha-D-glucosamine + NADPH + H(+). It participates in cell wall biogenesis; peptidoglycan biosynthesis. Its function is as follows. Cell wall formation. The sequence is that of UDP-N-acetylenolpyruvoylglucosamine reductase from Legionella pneumophila (strain Paris).